A 344-amino-acid polypeptide reads, in one-letter code: Tetraacyldisaccharide 4'-kinase (344 aa).

Residue His-65–Thr-72 coordinates ATP.

It belongs to the LpxK family.

The enzyme catalyses a lipid A disaccharide + ATP = a lipid IVA + ADP + H(+). It participates in glycolipid biosynthesis; lipid IV(A) biosynthesis; lipid IV(A) from (3R)-3-hydroxytetradecanoyl-[acyl-carrier-protein] and UDP-N-acetyl-alpha-D-glucosamine: step 6/6. Its function is as follows. Transfers the gamma-phosphate of ATP to the 4'-position of a tetraacyldisaccharide 1-phosphate intermediate (termed DS-1-P) to form tetraacyldisaccharide 1,4'-bis-phosphate (lipid IVA). In Neisseria meningitidis serogroup B (strain ATCC BAA-335 / MC58), this protein is Tetraacyldisaccharide 4'-kinase.